Consider the following 351-residue polypeptide: MSRAPRTARAELPKGAQARHVPVLLAEVLAALSLDRPGLAVDGTFGAGGYTRALLEAGPEVRVIAIDRDPTAIRGGADLVTASGGRLRLVQGRFGDLDTLIADQDEPQADWVVLDIGVSSMQIDEAQRGFSFRQDGPLDMRMGGEGPSAADLVNGEEETTLADILYHFGEERRSRAVARAIVEARRRAPIETTAQLADLVAGVVRPEPGSPIHPATRSFQGLRIAVNDELGELVRGLHAAERVLKPGGRLAVVTFHSLEDRIVKQFFSARSGRAAQASRHVPGVERPAPKSFKLVTKGPVLPSEAETDVNPRSRSAKLRAGERTDAPAPPPLSAIETLASLPAPQGRGPRR.

Residues 48–50 (GGY), D67, F94, D115, and Q122 each bind S-adenosyl-L-methionine. A disordered region spans residues 274 to 351 (AAQASRHVPG…PAPQGRGPRR (78 aa)).

This sequence belongs to the methyltransferase superfamily. RsmH family.

It is found in the cytoplasm. The catalysed reaction is cytidine(1402) in 16S rRNA + S-adenosyl-L-methionine = N(4)-methylcytidine(1402) in 16S rRNA + S-adenosyl-L-homocysteine + H(+). In terms of biological role, specifically methylates the N4 position of cytidine in position 1402 (C1402) of 16S rRNA. The polypeptide is Ribosomal RNA small subunit methyltransferase H (Methylorubrum extorquens (strain PA1) (Methylobacterium extorquens)).